Consider the following 99-residue polypeptide: Nucleoid-associated protein LACR_0106 (99 aa).

The protein belongs to the YbaB/EbfC family. In terms of assembly, homodimer.

It is found in the cytoplasm. Its subcellular location is the nucleoid. In terms of biological role, binds to DNA and alters its conformation. May be involved in regulation of gene expression, nucleoid organization and DNA protection. The polypeptide is Nucleoid-associated protein LACR_0106 (Lactococcus lactis subsp. cremoris (strain SK11)).